The primary structure comprises 207 residues: Guanylate kinase (207 aa).

Positions 4-184 (GTLYIVSAPS…ALMDFKAIIR (181 aa)) constitute a Guanylate kinase-like domain. 11–18 (APSGAGKS) contacts ATP.

The protein belongs to the guanylate kinase family.

Its subcellular location is the cytoplasm. It catalyses the reaction GMP + ATP = GDP + ADP. Functionally, essential for recycling GMP and indirectly, cGMP. This chain is Guanylate kinase, found in Vibrio vulnificus (strain CMCP6).